A 99-amino-acid chain; its full sequence is MNPENYLYLSALLFTIGAAGVLIRRNAIIVFMCIELMLNASNLAFVTFARMHGNLDGQVFAFFTMVVAAAEVVVGLAIIMTIFRSRRSASVDDANLLKN.

The next 3 membrane-spanning stretches (helical) occupy residues 3–23, 28–48, and 59–79; these read PENY…GVLI, IIVF…FVTF, and VFAF…LAII.

It belongs to the complex I subunit 4L family. As to quaternary structure, NDH-1 is composed of 14 different subunits. Subunits NuoA, H, J, K, L, M, N constitute the membrane sector of the complex.

The protein resides in the cell membrane. The enzyme catalyses a quinone + NADH + 5 H(+)(in) = a quinol + NAD(+) + 4 H(+)(out). Functionally, NDH-1 shuttles electrons from NADH, via FMN and iron-sulfur (Fe-S) centers, to quinones in the respiratory chain. The immediate electron acceptor for the enzyme in this species is believed to be a menaquinone. Couples the redox reaction to proton translocation (for every two electrons transferred, four hydrogen ions are translocated across the cytoplasmic membrane), and thus conserves the redox energy in a proton gradient. This is NADH-quinone oxidoreductase subunit K from Rhodococcus jostii (strain RHA1).